The chain runs to 65 residues: Conotoxin VnMLCL-031 (65 aa).

Positions 1–19 are cleaved as a signal peptide; that stretch reads MLCLPXFIILLLLASPAAP. Residues 20–43 constitute a propeptide that is removed on maturation; the sequence is NPLQTRXQSNLIRAGPEDANIKTX. The residue at position 64 (isoleucine 64) is an Isoleucine amide.

This sequence belongs to the conotoxin T superfamily. As to expression, expressed by the venom duct.

It localises to the secreted. This chain is Conotoxin VnMLCL-031, found in Conus ventricosus (Mediterranean cone).